The sequence spans 445 residues: Exodeoxyribonuclease 7 large subunit (445 aa).

Belongs to the XseA family. In terms of assembly, heterooligomer composed of large and small subunits.

It localises to the cytoplasm. It carries out the reaction Exonucleolytic cleavage in either 5'- to 3'- or 3'- to 5'-direction to yield nucleoside 5'-phosphates.. In terms of biological role, bidirectionally degrades single-stranded DNA into large acid-insoluble oligonucleotides, which are then degraded further into small acid-soluble oligonucleotides. This is Exodeoxyribonuclease 7 large subunit from Delftia acidovorans (strain DSM 14801 / SPH-1).